A 636-amino-acid polypeptide reads, in one-letter code: DNA gyrase subunit B (636 aa).

Residues 421 to 535 enclose the Toprim domain; the sequence is TELFIVEGDS…QGRVYIALPP (115 aa). Residues E427, D500, and D502 each coordinate Mg(2+).

This sequence belongs to the type II topoisomerase GyrB family. Heterotetramer, composed of two GyrA and two GyrB chains. In the heterotetramer, GyrA contains the active site tyrosine that forms a transient covalent intermediate with DNA, while GyrB binds cofactors and catalyzes ATP hydrolysis. Mg(2+) is required as a cofactor. Mn(2+) serves as cofactor. Requires Ca(2+) as cofactor.

The protein resides in the cytoplasm. It catalyses the reaction ATP-dependent breakage, passage and rejoining of double-stranded DNA.. Functionally, a type II topoisomerase that negatively supercoils closed circular double-stranded (ds) DNA in an ATP-dependent manner to modulate DNA topology and maintain chromosomes in an underwound state. Negative supercoiling favors strand separation, and DNA replication, transcription, recombination and repair, all of which involve strand separation. Also able to catalyze the interconversion of other topological isomers of dsDNA rings, including catenanes and knotted rings. Type II topoisomerases break and join 2 DNA strands simultaneously in an ATP-dependent manner. The chain is DNA gyrase subunit B from Thermotoga maritima (strain ATCC 43589 / DSM 3109 / JCM 10099 / NBRC 100826 / MSB8).